We begin with the raw amino-acid sequence, 106 residues long: UPF0145 protein Tpet_0165 (106 aa).

Belongs to the UPF0145 family.

This chain is UPF0145 protein Tpet_0165, found in Thermotoga petrophila (strain ATCC BAA-488 / DSM 13995 / JCM 10881 / RKU-1).